Reading from the N-terminus, the 383-residue chain is S-adenosylmethionine synthase (383 aa).

Histidine 15 serves as a coordination point for ATP. Aspartate 17 is a Mg(2+) binding site. Glutamate 43 provides a ligand contact to K(+). L-methionine contacts are provided by glutamate 56 and glutamine 99. The segment at 99 to 109 (QSPDINQGVDR) is flexible loop. ATP is bound by residues 164 to 166 (DAK), 230 to 231 (RF), aspartate 239, 245 to 246 (RK), alanine 262, and lysine 266. An L-methionine-binding site is contributed by aspartate 239. Lysine 270 serves as a coordination point for L-methionine.

It belongs to the AdoMet synthase family. Homotetramer; dimer of dimers. Mg(2+) is required as a cofactor. Requires K(+) as cofactor.

Its subcellular location is the cytoplasm. It catalyses the reaction L-methionine + ATP + H2O = S-adenosyl-L-methionine + phosphate + diphosphate. The protein operates within amino-acid biosynthesis; S-adenosyl-L-methionine biosynthesis; S-adenosyl-L-methionine from L-methionine: step 1/1. Functionally, catalyzes the formation of S-adenosylmethionine (AdoMet) from methionine and ATP. The overall synthetic reaction is composed of two sequential steps, AdoMet formation and the subsequent tripolyphosphate hydrolysis which occurs prior to release of AdoMet from the enzyme. The chain is S-adenosylmethionine synthase from Shewanella loihica (strain ATCC BAA-1088 / PV-4).